The chain runs to 300 residues: 33 kDa chaperonin (300 aa).

Disulfide bonds link C247–C249 and C280–C283.

The protein belongs to the HSP33 family. Under oxidizing conditions two disulfide bonds are formed involving the reactive cysteines. Under reducing conditions zinc is bound to the reactive cysteines and the protein is inactive.

It localises to the cytoplasm. Its function is as follows. Redox regulated molecular chaperone. Protects both thermally unfolding and oxidatively damaged proteins from irreversible aggregation. Plays an important role in the bacterial defense system toward oxidative stress. This chain is 33 kDa chaperonin, found in Prochlorococcus marinus (strain MIT 9312).